The following is a 363-amino-acid chain: Peptide chain release factor 1 (363 aa).

An N5-methylglutamine modification is found at Gln237. Residues Glu284–Arg296 are compositionally biased toward basic and acidic residues. The interval Glu284–Ser306 is disordered.

Belongs to the prokaryotic/mitochondrial release factor family. In terms of processing, methylated by PrmC. Methylation increases the termination efficiency of RF1.

It is found in the cytoplasm. Functionally, peptide chain release factor 1 directs the termination of translation in response to the peptide chain termination codons UAG and UAA. The chain is Peptide chain release factor 1 from Shewanella oneidensis (strain ATCC 700550 / JCM 31522 / CIP 106686 / LMG 19005 / NCIMB 14063 / MR-1).